A 464-amino-acid chain; its full sequence is GDNF family receptor alpha-2 (464 aa).

Residues 1–21 (MILANVFCLFFFLDETLRSLA) form the signal peptide. Intrachain disulfides connect C40-C93, C47-C53, C63-C78, C95-C105, C161-C222, C168-C174, C185-C200, C195-C241, C224-C229, C251-C323, C258-C264, C275-C293, C285-C347, and C325-C335. The N-linked (GlcNAc...) asparagine glycan is linked to N52. 2 N-linked (GlcNAc...) asparagine glycosylation sites follow: N357 and N413. S444 carries GPI-anchor amidated serine lipidation. Positions 445–464 (RARPSAALTVLSVLMLKLAL) are cleaved as a propeptide — removed in mature form.

The protein belongs to the GDNFR family. As to quaternary structure, interacts with NRTN ligand and RET: forms a 2:2:2 ternary complex composed of NRTN ligand, GFRA2 and RET receptor. Also forms a 4:4:4 tetrameric complex composed of 4 copies of NRTN ligand, GFRA2 and RET receptor, which prevents endocytosis of RET. Interacts with SORL1.

It localises to the cell membrane. Its function is as follows. Receptor for neurturin (NRTN), a growth factor that supports the survival of sympathetic neurons. NRTN-binding leads to autophosphorylation and activation of the RET receptor. Also able to mediate GDNF signaling through the RET tyrosine kinase receptor. The protein is GDNF family receptor alpha-2 (GFRA2) of Pongo abelii (Sumatran orangutan).